We begin with the raw amino-acid sequence, 429 residues long: Septin-11 (429 aa).

Residue Ala-2 is modified to N-acetylalanine. Ser-9 bears the Phosphoserine mark. The region spanning Gln-38–Glu-304 is the Septin-type G domain. A G1 motif region spans residues Gly-48–Ser-55. Residues Gly-48–Ser-55, Gly-103, Lys-184–Glu-192, Gly-238, and Arg-253 each bind GTP. A G3 motif region spans residues Asp-100 to Gly-103. The G4 motif stretch occupies residues Ala-183–Asp-186. A coiled-coil region spans residues Gln-320–Gln-415. The segment at Lys-398 to Thr-429 is disordered. Positions Ala-401–Gln-416 are enriched in low complexity. Residues Thr-417 to Thr-429 are compositionally biased toward basic and acidic residues.

This sequence belongs to the TRAFAC class TrmE-Era-EngA-EngB-Septin-like GTPase superfamily. Septin GTPase family. Septins polymerize into heterooligomeric protein complexes that form filaments, and can associate with cellular membranes, actin filaments and microtubules. Forms homooligomers. GTPase activity is required for filament formation. Interacts with SEPTIN7, SEPTIN9 and SEPTIN12. As to expression, widely expressed, except in leukocytes.

The protein localises to the cytoplasm. The protein resides in the cytoskeleton. It localises to the synapse. It is found in the cell projection. Its subcellular location is the dendritic spine. The protein localises to the axon. Its function is as follows. Filament-forming cytoskeletal GTPase. May play a role in cytokinesis (Potential). May play a role in the cytoarchitecture of neurons, including dendritic arborization and dendritic spines, and in GABAergic synaptic connectivity. During Listeria monocytogenes infection, not required for the bacterial entry process, but restricts its efficacy. This Homo sapiens (Human) protein is Septin-11.